Consider the following 165-residue polypeptide: UI (165 aa).

Residues 1-18 form the signal peptide; sequence MKPVPLILLLATVLLSSH. A Valine amide modification is found at V163.

Belongs to the sauvagine/corticotropin-releasing factor/urotensin I family.

The protein resides in the secreted. Functionally, urotensin is found in the teleost caudal neurosecretory system. It has a suggested role in osmoregulation and as a corticotropin-releasing factor. The non-hormonal portion of this precursor may be a urotensin binding protein, urophysin. This is UI from Oncorhynchus mykiss (Rainbow trout).